We begin with the raw amino-acid sequence, 1109 residues long: Ankyrin repeat- and BTB/POZ domain-containing protein 3 (1109 aa).

A helical transmembrane segment spans residues 168-188; the sequence is IVLSWGLAAHCTAAALAALSL. Positions 260–302 are disordered; that stretch reads SCSGPGPGSSSGSGPGPGSGPGAPAADKERETPGGGAASGGPC. Residues 264-280 show a composition bias toward gly residues; it reads PGPGSSSGSGPGPGSGP. 5 ANK repeats span residues 608 to 637, 654 to 683, 692 to 721, 735 to 764, and 830 to 859; these read QGMTPLMYACVRGDEAMVQMLLDAGADLNV, RHWTALTFAVLHGHIPVVQLLLDAGAKVEG, YSETPLQLAAAVGNFELVSLLLERGADPLI, GDMNSFSQAAAHGHRNVFRKLLAQPEKEKS, and TWLESLRIAFQQHRRPLIQCLLKEFKTIQE. The BTB domain maps to 928 to 994; it reads SDVTFLVEGR…LYYGGPESLL (67 aa).

The protein resides in the membrane. The sequence is that of Ankyrin repeat- and BTB/POZ domain-containing protein 3 (Abtb3) from Mus musculus (Mouse).